A 159-amino-acid chain; its full sequence is Ribosomal RNA large subunit methyltransferase H (159 aa).

Leu76 and Gly108 together coordinate S-adenosyl-L-methionine.

It belongs to the RNA methyltransferase RlmH family. In terms of assembly, homodimer.

The protein localises to the cytoplasm. The catalysed reaction is pseudouridine(1915) in 23S rRNA + S-adenosyl-L-methionine = N(3)-methylpseudouridine(1915) in 23S rRNA + S-adenosyl-L-homocysteine + H(+). Its function is as follows. Specifically methylates the pseudouridine at position 1915 (m3Psi1915) in 23S rRNA. The sequence is that of Ribosomal RNA large subunit methyltransferase H from Pediococcus pentosaceus (strain ATCC 25745 / CCUG 21536 / LMG 10740 / 183-1w).